Here is a 222-residue protein sequence, read N- to C-terminus: Thiopurine S-methyltransferase (222 aa).

S-adenosyl-L-methionine-binding residues include Trp10, Leu45, Glu66, and Arg126.

Belongs to the class I-like SAM-binding methyltransferase superfamily. TPMT family.

It localises to the cytoplasm. It carries out the reaction S-adenosyl-L-methionine + a thiopurine = S-adenosyl-L-homocysteine + a thiopurine S-methylether.. The polypeptide is Thiopurine S-methyltransferase (Shewanella piezotolerans (strain WP3 / JCM 13877)).